The chain runs to 580 residues: Putative adenine deaminase YerA (580 aa).

Serine 399 carries the post-translational modification Phosphoserine.

Belongs to the metallo-dependent hydrolases superfamily. Adenine deaminase family.

It carries out the reaction adenine + H2O + H(+) = hypoxanthine + NH4(+). This is Putative adenine deaminase YerA (yerA) from Bacillus subtilis (strain 168).